A 2458-amino-acid chain; its full sequence is Acetyl-CoA carboxylase 2 (2458 aa).

Residue S35 is modified to Phosphoserine. The disordered stretch occupies residues 35–155; the sequence is SKSEANLIPS…SPSKEDKKQA (121 aa). The segment covering 51–60 has biased composition (polar residues); that stretch reads SDNSGETPQR. At T70 the chain carries Phosphothreonine. The span at 77-87 shows a compositional bias: basic and acidic residues; the sequence is ASHKGPKDAGR. A phosphoserine mark is found at S91 and S95. Positions 103–146 are enriched in polar residues; the sequence is PLSSSDAAPSPELQANGTGTQGLEATDTNGLSSSARPQGQQAGS. 5 positions are modified to phosphoserine: S169, S175, S192, S195, and S200. The tract at residues 174 to 193 is disordered; that stretch reads SSDEDSVAGSSRESTRKGSR. T207 is modified (phosphothreonine). S220 bears the Phosphoserine mark. At S222 the chain carries Phosphoserine; by AMPK. The Biotin carboxylation domain maps to 259-761; that stretch reads VIEKVLIANN…DTGWLDYLIA (503 aa). The ATP-grasp domain occupies 414-609; the sequence is DDLQQGKRIS…LPAAQLQIAM (196 aa). Position 458 to 463 (458 to 463) interacts with ATP; sequence GGGGKG. S469 bears the Phosphoserine mark. Mg(2+)-binding residues include E567, E580, and N582. 3 residues coordinate Mn(2+): E567, E580, and N582. R584 is a catalytic residue. T753 is modified (phosphothreonine). The Biotinyl-binding domain occupies 888–962; it reads FEKENDPTVL…EAGCVVARLE (75 aa). K929 is subject to N6-biotinyllysine. Position 1340 is a phosphoserine (S1340). T1342 is modified (phosphothreonine). Phosphoserine is present on residues S1360 and S1405. In terms of domain architecture, CoA carboxyltransferase N-terminal spans 1695–2025; it reads PYVTKDLLQA…DNHSPVPIIT (331 aa). The segment at 1695 to 2345 is carboxyltransferase; it reads PYVTKDLLQA…EDQVKQEILQ (651 aa). CoA contacts are provided by R1934, K2238, and R2240. The region spanning 2029 to 2345 is the CoA carboxyltransferase C-terminal domain; the sequence is PIDREIEFLP…EDQVKQEILQ (317 aa).

Monomer, homodimer, and homotetramer. Forms filamentous polymers. Interacts with MID1IP1; interaction with MID1IP1 promotes oligomerization and increases its activity in a citrate-dependent manner. The cofactor is biotin. Requires Mg(2+) as cofactor. It depends on Mn(2+) as a cofactor. The biotin cofactor is covalently attached to the central biotinyl-binding domain and is required for the catalytic activity. In terms of processing, phosphorylation at Ser-222 by AMPK inactivates the enzyme. Required for the maintenance of skeletal muscle lipid and glucose homeostasis. As to expression, widely expressed with highest levels in heart, skeletal muscle, liver, adipose tissue, mammary gland, adrenal gland and colon. Isoform 3 is expressed in skeletal muscle, adipose tissue and liver (at protein level). Isoform 3 is detected at high levels in adipose tissue with lower levels in heart, liver, skeletal muscle and testis.

It is found in the mitochondrion. The enzyme catalyses hydrogencarbonate + acetyl-CoA + ATP = malonyl-CoA + ADP + phosphate + H(+). It functions in the pathway lipid metabolism; malonyl-CoA biosynthesis; malonyl-CoA from acetyl-CoA: step 1/1. Activity is increased by oligomerization of the protein into filaments. The oligomerization and the activity of the enzyme are inhibited by phosphorylation at Ser-222. Inhibited by its product, malonyl-CoA. Activated by citrate. Activation by MID1IP1 is citrate-dependent. Soraphen A, inhibits the enzyme by preventing the formation of active filamentous oligomers. In terms of biological role, mitochondrial enzyme that catalyzes the carboxylation of acetyl-CoA to malonyl-CoA and plays a central role in fatty acid metabolism. Catalyzes a 2 steps reaction starting with the ATP-dependent carboxylation of the biotin carried by the biotin carboxyl carrier (BCC) domain followed by the transfer of the carboxyl group from carboxylated biotin to acetyl-CoA. Through the production of malonyl-CoA that allosterically inhibits carnitine palmitoyltransferase 1 at the mitochondria, negatively regulates fatty acid oxidation. Together with its cytosolic isozyme ACACA, which is involved in de novo fatty acid biosynthesis, promotes lipid storage. The protein is Acetyl-CoA carboxylase 2 of Homo sapiens (Human).